Consider the following 370-residue polypeptide: Queuine tRNA-ribosyltransferase (370 aa).

The active-site Proton acceptor is the D89. Residues 89 to 93, D143, Q185, and G212 contribute to the substrate site; that span reads DSGGF. Residues 243–249 are RNA binding; sequence GVGKPED. D262 acts as the Nucleophile in catalysis. The RNA binding; important for wobble base 34 recognition stretch occupies residues 267-271; it reads TRNAR. Zn(2+) is bound by residues C300, C302, C305, and H331.

This sequence belongs to the queuine tRNA-ribosyltransferase family. In terms of assembly, homodimer. Within each dimer, one monomer is responsible for RNA recognition and catalysis, while the other monomer binds to the replacement base PreQ1. Zn(2+) is required as a cofactor.

The catalysed reaction is 7-aminomethyl-7-carbaguanine + guanosine(34) in tRNA = 7-aminomethyl-7-carbaguanosine(34) in tRNA + guanine. The protein operates within tRNA modification; tRNA-queuosine biosynthesis. Functionally, catalyzes the base-exchange of a guanine (G) residue with the queuine precursor 7-aminomethyl-7-deazaguanine (PreQ1) at position 34 (anticodon wobble position) in tRNAs with GU(N) anticodons (tRNA-Asp, -Asn, -His and -Tyr). Catalysis occurs through a double-displacement mechanism. The nucleophile active site attacks the C1' of nucleotide 34 to detach the guanine base from the RNA, forming a covalent enzyme-RNA intermediate. The proton acceptor active site deprotonates the incoming PreQ1, allowing a nucleophilic attack on the C1' of the ribose to form the product. After dissociation, two additional enzymatic reactions on the tRNA convert PreQ1 to queuine (Q), resulting in the hypermodified nucleoside queuosine (7-(((4,5-cis-dihydroxy-2-cyclopenten-1-yl)amino)methyl)-7-deazaguanosine). The polypeptide is Queuine tRNA-ribosyltransferase (Pseudoalteromonas atlantica (strain T6c / ATCC BAA-1087)).